The sequence spans 313 residues: Ribosomal RNA small subunit methyltransferase H (313 aa).

Residues G35–H37, D55, F79, D101, and Q108 each bind S-adenosyl-L-methionine. Residues Q276 to A300 are disordered.

This sequence belongs to the methyltransferase superfamily. RsmH family.

Its subcellular location is the cytoplasm. The enzyme catalyses cytidine(1402) in 16S rRNA + S-adenosyl-L-methionine = N(4)-methylcytidine(1402) in 16S rRNA + S-adenosyl-L-homocysteine + H(+). Specifically methylates the N4 position of cytidine in position 1402 (C1402) of 16S rRNA. In Dickeya chrysanthemi (strain Ech1591) (Dickeya zeae (strain Ech1591)), this protein is Ribosomal RNA small subunit methyltransferase H.